We begin with the raw amino-acid sequence, 495 residues long: ATP-NADH kinase YEF1 (495 aa).

The segment at 442–480 is disordered; it reads KYRLDSSKNGNDTISNPLESSCISSDAQDEERKSVTETE. The segment covering 448 to 467 has biased composition (polar residues); sequence SKNGNDTISNPLESSCISSD.

This sequence belongs to the NAD kinase family. As to quaternary structure, homooctamer. It depends on Mg(2+) as a cofactor. Mn(2+) is required as a cofactor. The cofactor is Co(2+). Ca(2+) serves as cofactor.

It carries out the reaction NADH + ATP = ADP + NADPH + H(+). ATP-NADH kinase with a low phosphorylation activity of both NADH and NAD(+) to produce NADP and NADPH by using ATP. UTR1 is responsible for essentially all of the NAD/NADH kinase activity resident in the cytoplasm, whereas POS5 is responsible for all mitochondrial NAD/NADH kinase activity and consequent mitochondrial genome maintenance. YEF1 can substitute for UTR1 when overexpressed. This chain is ATP-NADH kinase YEF1 (YEF1), found in Saccharomyces cerevisiae (strain ATCC 204508 / S288c) (Baker's yeast).